The primary structure comprises 872 residues: MKELSSAQIRQMWLDFWKSKGHCVEPSANLVPVNDPTLLWINSGVATLKKYFDGSVIPENPRITNAQKSIRTNDIENVGKTARHHTMFEMLGNFSIGDYFRDEAIEWGFELLTSPDWFDFPKDKLYMTYYPDDKDSYNRWIACGVEPSHLVPIEDNFWEIGAGPSGPDTEIFFDRGEDFDPENIGLRLLAEDIENDRYIEIWNIVLSQFNADPAVPRSEYKELPNKNIDTGAGLERLAAVMQGAKTNFETDLFMPIIREVEKLSGKTYDPDGDNMSFKVIADHIRALSFAIGDGALPGNEGRGYVLRRLLRRAVMHGRRLGINETFLYKLVPTVGQIMESYYPEVLEKRDFIEKIVKREEETFARTIDAGSGHLDSLLAQLKAEGKDTLEGKDIFKLYDTYGFPVELTEELAEDAGYKIDHEGFKSAMKEQQDRARAAVVKGGSMGMQNETLAGIVEESRFEYDTYSLESSLSVIIADNERTEAVSEGQALLVFAQTPFYAEMGGQVADTGRIKNDKGDTVAEVVDVQKAPNGQPLHTVNVLASLSVGTNYTLEINKERRLAVEKNHTATHLLHAALHNVIGEHATQAGSLNEEEFLRFDFTHFEAVSNEELRHIEQEVNEQIWNALTITTTETDVETAKEMGAMALFGEKYGKVVRVVQIGNYSVELCGGTHLNNSSEIGLFKIVKEEGIGSGTRRIIAVTGRQAFEAYRNQEDALKDIAATVKAPQLKDAAAKVQALSDSLRDLQKENAELKEKAAAAAAGDVFKDVQEAKGVRFIASQVDVADAGALRTFADNWKQKDYSDVLVLVAAIGEKVNVLVASKTKDVHAGNMIKELAPIVAGRGGGKPDMAMAGGSDASKIAELLAAVAEIV.

The Zn(2+) site is built by histidine 567, histidine 571, cysteine 669, and histidine 673.

The protein belongs to the class-II aminoacyl-tRNA synthetase family. Requires Zn(2+) as cofactor.

Its subcellular location is the cytoplasm. The enzyme catalyses tRNA(Ala) + L-alanine + ATP = L-alanyl-tRNA(Ala) + AMP + diphosphate. In terms of biological role, catalyzes the attachment of alanine to tRNA(Ala) in a two-step reaction: alanine is first activated by ATP to form Ala-AMP and then transferred to the acceptor end of tRNA(Ala). Also edits incorrectly charged Ser-tRNA(Ala) and Gly-tRNA(Ala) via its editing domain. The polypeptide is Alanine--tRNA ligase (Streptococcus pyogenes serotype M3 (strain ATCC BAA-595 / MGAS315)).